Here is a 172-residue protein sequence, read N- to C-terminus: MAAQTQRAVLAGGCFWGMEELIRRLPGVTATRVGYTGGDVPNATYRNHGTHAEAIEILFDPEATDYRALLEFFFQIHDPSTKNRQGNDIGLSYRSAIYYVDDEQKRIAEDTIADVDASGLWPGKVVTEVEPVGPFWEAEPEHQDYLQRYPDGYTCHFPRPGWRLPARSGSEG.

Cysteine 14 is an active-site residue.

This sequence belongs to the MsrA Met sulfoxide reductase family.

The catalysed reaction is L-methionyl-[protein] + [thioredoxin]-disulfide + H2O = L-methionyl-(S)-S-oxide-[protein] + [thioredoxin]-dithiol. It carries out the reaction [thioredoxin]-disulfide + L-methionine + H2O = L-methionine (S)-S-oxide + [thioredoxin]-dithiol. In terms of biological role, has an important function as a repair enzyme for proteins that have been inactivated by oxidation. Catalyzes the reversible oxidation-reduction of methionine sulfoxide in proteins to methionine. The polypeptide is Peptide methionine sulfoxide reductase MsrA (Streptomyces coelicolor (strain ATCC BAA-471 / A3(2) / M145)).